We begin with the raw amino-acid sequence, 305 residues long: NAD kinase (305 aa).

The active-site Proton acceptor is the aspartate 88. NAD(+) is bound by residues 88–89, arginine 93, 162–163, lysine 173, asparagine 192, 203–208, and glutamine 262; these read DG, NE, and TAYSFS.

This sequence belongs to the NAD kinase family. The cofactor is a divalent metal cation.

The protein localises to the cytoplasm. It catalyses the reaction NAD(+) + ATP = ADP + NADP(+) + H(+). In terms of biological role, involved in the regulation of the intracellular balance of NAD and NADP, and is a key enzyme in the biosynthesis of NADP. Catalyzes specifically the phosphorylation on 2'-hydroxyl of the adenosine moiety of NAD to yield NADP. This Tropheryma whipplei (strain TW08/27) (Whipple's bacillus) protein is NAD kinase.